Reading from the N-terminus, the 157-residue chain is 2-C-methyl-D-erythritol 2,4-cyclodiphosphate synthase (157 aa).

Positions 8 and 10 each coordinate a divalent metal cation. Residues aspartate 8–histidine 10 and histidine 34–serine 35 each bind 4-CDP-2-C-methyl-D-erythritol 2-phosphate. Histidine 42 is an a divalent metal cation binding site. Residues aspartate 56–glycine 58, threonine 132–glutamate 135, and arginine 142 contribute to the 4-CDP-2-C-methyl-D-erythritol 2-phosphate site.

This sequence belongs to the IspF family. As to quaternary structure, homotrimer. It depends on a divalent metal cation as a cofactor.

The enzyme catalyses 4-CDP-2-C-methyl-D-erythritol 2-phosphate = 2-C-methyl-D-erythritol 2,4-cyclic diphosphate + CMP. It functions in the pathway isoprenoid biosynthesis; isopentenyl diphosphate biosynthesis via DXP pathway; isopentenyl diphosphate from 1-deoxy-D-xylulose 5-phosphate: step 4/6. Functionally, involved in the biosynthesis of isopentenyl diphosphate (IPP) and dimethylallyl diphosphate (DMAPP), two major building blocks of isoprenoid compounds. Catalyzes the conversion of 4-diphosphocytidyl-2-C-methyl-D-erythritol 2-phosphate (CDP-ME2P) to 2-C-methyl-D-erythritol 2,4-cyclodiphosphate (ME-CPP) with a corresponding release of cytidine 5-monophosphate (CMP). The chain is 2-C-methyl-D-erythritol 2,4-cyclodiphosphate synthase from Prosthecochloris aestuarii (strain DSM 271 / SK 413).